Reading from the N-terminus, the 124-residue chain is UPF0212 protein Hlac_0869 (124 aa).

It belongs to the UPF0212 family.

In Halorubrum lacusprofundi (strain ATCC 49239 / DSM 5036 / JCM 8891 / ACAM 34), this protein is UPF0212 protein Hlac_0869.